We begin with the raw amino-acid sequence, 753 residues long: ATPase family gene 2 protein homolog B (753 aa).

The residue at position 1 (methionine 1) is an N-acetylmethionine. The interval 1-189 (MAPDSDPFPE…PRTRVSLGGE (189 aa)) is required for interaction with AFG2A and CINP. Residues 171–203 (SPDPAGLVTPRTRVSLGGEPPSEAQPQPEVPLG) form a disordered region. Residues 241-248 (GPPGVGKT) and 505-512 (GPPGCAKT) contribute to the ATP site.

It belongs to the AAA ATPase family. AFG2 subfamily. Part of the 55LCC heterohexameric ATPase complex composed at least of AIRIM, AFG2A, AFG2B and CINP. Associates with pre-60S ribosomal particles. In terms of tissue distribution, expressed in both neurons and glia during embryonic and adult stages of brain development.

It localises to the cytoplasm. It is found in the cytoskeleton. Its subcellular location is the spindle. The protein localises to the nucleus. It carries out the reaction ATP + H2O = ADP + phosphate + H(+). Its activity is regulated as follows. In the context of 55LCC heterohexameric ATPase complex, the ATPase activity is stimulated by DNA binding and inhibited in presence of RNA. Its function is as follows. ATP-dependent chaperone part of the 55LCC heterohexameric ATPase complex which is chromatin-associated and promotes replisome proteostasis to maintain replication fork progression and genome stability. Required for replication fork progression, sister chromatid cohesion, and chromosome stability. The ATPase activity is specifically enhanced by replication fork DNA and is coupled to cysteine protease-dependent cleavage of replisome substrates in response to replication fork damage. Uses ATPase activity to process replisome substrates in S-phase, facilitating their proteolytic turnover from chromatin to ensure DNA replication and mitotic fidelity. Plays an essential role in the cytoplasmic maturation steps of pre-60S ribosomal particles by promoting the release of shuttling protein RSL24D1/RLP24 from the pre-ribosomal particles. In Homo sapiens (Human), this protein is ATPase family gene 2 protein homolog B.